The chain runs to 170 residues: Urease accessory protein UreE (170 aa).

This sequence belongs to the UreE family.

It localises to the cytoplasm. Its function is as follows. Involved in urease metallocenter assembly. Binds nickel. Probably functions as a nickel donor during metallocenter assembly. This is Urease accessory protein UreE from Helicobacter pylori (strain G27).